Reading from the N-terminus, the 1954-residue chain is Protein GREB1 (1954 aa).

3 disordered regions span residues 48 to 83 (LSSL…QLPP), 238 to 342 (LAAF…AKHE), and 1083 to 1235 (KGPK…GSSS). Acidic residues predominate over residues 59–68 (NEEEEEDGEG). A compositionally biased stretch (low complexity) spans 292-303 (SSLSALPRPSAL). Composition is skewed to basic and acidic residues over residues 1083–1099 (KGPK…KLSS) and 1122–1133 (GPVKRERSHSHD). A compositionally biased stretch (low complexity) spans 1134 to 1146 (SASSSLSSRASGS). The segment covering 1187–1196 (RVSQGSTVIS) has biased composition (polar residues). Low complexity predominate over residues 1224–1235 (SSQLSSSSGSSS). A helical membrane pass occupies residues 1873 to 1893 (DMVFSGLLLYLCDSFVGASFL).

This sequence belongs to the GREB1 family.

It localises to the membrane. Its function is as follows. May play a role in estrogen-stimulated cell proliferation. This is Protein GREB1 (Greb1) from Mus musculus (Mouse).